The sequence spans 232 residues: MAKQGKRIRAVNEGIDRVKLYPLDEALALLKERTTAKFDETIEVALNLGVDPRHADQMVRGVCNLPNGSGRTVRVAVFARGAKADEAKAAGADIVGAEDLLETIQGGTIEFDRCIATPDLMPLVGRLGKVLGPRGLMPNPKVGTVTMDVKGAVAAAKGGAVEFRVEKAGIIHGGIGKASFPADKLAENIRAFVDAVVKAKPAGAKGTYLQRVAVSSTMGPGIKVEPATVHTA.

It belongs to the universal ribosomal protein uL1 family. As to quaternary structure, part of the 50S ribosomal subunit.

In terms of biological role, binds directly to 23S rRNA. The L1 stalk is quite mobile in the ribosome, and is involved in E site tRNA release. Its function is as follows. Protein L1 is also a translational repressor protein, it controls the translation of the L11 operon by binding to its mRNA. The chain is Large ribosomal subunit protein uL1 from Xanthobacter autotrophicus (strain ATCC BAA-1158 / Py2).